Here is a 156-residue protein sequence, read N- to C-terminus: Ribosomal RNA large subunit methyltransferase H (156 aa).

S-adenosyl-L-methionine contacts are provided by leucine 72 and glycine 104.

It belongs to the RNA methyltransferase RlmH family. As to quaternary structure, homodimer.

Its subcellular location is the cytoplasm. It carries out the reaction pseudouridine(1915) in 23S rRNA + S-adenosyl-L-methionine = N(3)-methylpseudouridine(1915) in 23S rRNA + S-adenosyl-L-homocysteine + H(+). Specifically methylates the pseudouridine at position 1915 (m3Psi1915) in 23S rRNA. In Maricaulis maris (strain MCS10) (Caulobacter maris), this protein is Ribosomal RNA large subunit methyltransferase H.